Here is a 305-residue protein sequence, read N- to C-terminus: uncharacterized protein (305 aa).

The protein belongs to the IIV-6 436R family.

This is an uncharacterized protein from Acheta domesticus (House cricket).